The following is a 240-amino-acid chain: Probable metal transport system ATP-binding protein TM_0124 (240 aa).

Residues Val4–Ile223 enclose the ABC transporter domain. Gly36–Thr43 is a binding site for ATP.

Belongs to the ABC transporter superfamily.

Part of an ATP-driven transport system TM_0123/TM_0124/TM_0125 for a metal. Probably responsible for energy coupling to the transport system. The chain is Probable metal transport system ATP-binding protein TM_0124 from Thermotoga maritima (strain ATCC 43589 / DSM 3109 / JCM 10099 / NBRC 100826 / MSB8).